The following is a 511-amino-acid chain: MAKKPVMLAILDGLGLSDHKDGNAFSLAKKPNLDKIFKEYPHTVLGASGLSVGLPDGQMGNSEVGHLNIGAGRIVYQALTRITKSIEDGDIFKNEALLKAIDNAKNNDSAIHFMGLLSDGGVHSHIDHLKGLIDFAAKSGVKKVYVHAFLDGRDTAPKSALTYIEDLEKHMAEVGVGSIATVSGRYYAMDRDKRWERIELAYNAMVLGKGEVATSPKEAVERSYHDNKTDEFVLPTVIEKDGKPVATIKSNDSVVFFNFRPDRARQITRAINDKEFDGFKRETLNLVFVTMTEYDSTIEGVEVAFKPESYVNTLGEYVSKQGKKQLRIAETEKYAHVTFFFNGGVEEPNQNEDRALIPSPKVATYDLKPEMSAYEVTDEVLKRIDSDEYDMIILNYANPDMVGHTGVIDAAVKAVETVDECLGKVMDKILEKNGALFITADHGNCEQMIDYSTGNPMTAHTTNLVPFAYIANDAKEKELREEGILADIAPTMLQSMGLEVPKEMTGKSLFK.

Mn(2+)-binding residues include Asp12 and Ser62. Ser62 functions as the Phosphoserine intermediate in the catalytic mechanism. Residues His123, 153–154, Arg185, Arg191, 260–263, and Lys333 each bind substrate; these read RD and RPDR. Mn(2+) contacts are provided by Asp400, His404, Asp441, His442, and His460.

Belongs to the BPG-independent phosphoglycerate mutase family. In terms of assembly, monomer. The cofactor is Mn(2+).

The catalysed reaction is (2R)-2-phosphoglycerate = (2R)-3-phosphoglycerate. The protein operates within carbohydrate degradation; glycolysis; pyruvate from D-glyceraldehyde 3-phosphate: step 3/5. Functionally, catalyzes the interconversion of 2-phosphoglycerate and 3-phosphoglycerate. In Clostridium novyi (strain NT), this protein is 2,3-bisphosphoglycerate-independent phosphoglycerate mutase.